We begin with the raw amino-acid sequence, 598 residues long: Aspartate--tRNA(Asp/Asn) ligase (598 aa).

Glu-182 contacts L-aspartate. Positions 206 to 209 are aspartate; sequence QIFK. An L-aspartate-binding site is contributed by Arg-228. ATP contacts are provided by residues 228 to 230 and Gln-237; that span reads RDE. Position 456 (His-456) interacts with L-aspartate. An ATP-binding site is contributed by Glu-490. Arg-497 contacts L-aspartate. 542–545 serves as a coordination point for ATP; sequence GLDR.

This sequence belongs to the class-II aminoacyl-tRNA synthetase family. Type 1 subfamily. As to quaternary structure, homodimer.

It localises to the cytoplasm. The catalysed reaction is tRNA(Asx) + L-aspartate + ATP = L-aspartyl-tRNA(Asx) + AMP + diphosphate. Aspartyl-tRNA synthetase with relaxed tRNA specificity since it is able to aspartylate not only its cognate tRNA(Asp) but also tRNA(Asn). Reaction proceeds in two steps: L-aspartate is first activated by ATP to form Asp-AMP and then transferred to the acceptor end of tRNA(Asp/Asn). The chain is Aspartate--tRNA(Asp/Asn) ligase from Lachnoclostridium phytofermentans (strain ATCC 700394 / DSM 18823 / ISDg) (Clostridium phytofermentans).